Reading from the N-terminus, the 198-residue chain is MKVTKADIVISAVKPEQYPDSDLPEIALAGRSNVGKSSFINKILNRKKLVRISSKPGKTQTLNFFLINEMMHFVDVPGYGYAKVSKSERAAWGKMIETYFTTREQLDAAVLVVDLRHQPTSDDVMMYDFLKHYEIPTIIIATKADKIPKGKWQKHLKVVKETLAVEIGDEIVLFSSETGLGKEEAWKAIHKFTKTKNA.

Residues 22–195 (DLPEIALAGR…WKAIHKFTKT (174 aa)) enclose the EngB-type G domain. GTP-binding positions include 30-37 (GRSNVGKS), 57-61 (GKTQT), 75-78 (DVPG), 142-145 (TKAD), and 174-176 (FSS). Positions 37 and 59 each coordinate Mg(2+).

Belongs to the TRAFAC class TrmE-Era-EngA-EngB-Septin-like GTPase superfamily. EngB GTPase family. The cofactor is Mg(2+).

Its function is as follows. Necessary for normal cell division and for the maintenance of normal septation. The polypeptide is Probable GTP-binding protein EngB (Bacillus cereus (strain B4264)).